A 323-amino-acid polypeptide reads, in one-letter code: tRNA U34 carboxymethyltransferase (323 aa).

Carboxy-S-adenosyl-L-methionine is bound by residues K91, W105, K110, G130, D152–T154, I181–E182, M196, Y200, and R315.

The protein belongs to the class I-like SAM-binding methyltransferase superfamily. CmoB family. In terms of assembly, homotetramer.

It catalyses the reaction carboxy-S-adenosyl-L-methionine + 5-hydroxyuridine(34) in tRNA = 5-carboxymethoxyuridine(34) in tRNA + S-adenosyl-L-homocysteine + H(+). In terms of biological role, catalyzes carboxymethyl transfer from carboxy-S-adenosyl-L-methionine (Cx-SAM) to 5-hydroxyuridine (ho5U) to form 5-carboxymethoxyuridine (cmo5U) at position 34 in tRNAs. In Escherichia fergusonii (strain ATCC 35469 / DSM 13698 / CCUG 18766 / IAM 14443 / JCM 21226 / LMG 7866 / NBRC 102419 / NCTC 12128 / CDC 0568-73), this protein is tRNA U34 carboxymethyltransferase.